A 118-amino-acid chain; its full sequence is Transcriptional regulator WhiB4 (118 aa).

In terms of domain architecture, 4Fe-4S Wbl-type spans 36-92; sequence LCRTTDPDELFVRGAAQRKAAVICRHCPVMQECAADALDNKVEFGVWGGMTERQRRA. [4Fe-4S] cluster-binding residues include cysteine 37, cysteine 59, cysteine 62, and cysteine 68. Cystine bridges form between cysteine 37/cysteine 68 and cysteine 59/cysteine 62.

It belongs to the WhiB family. [4Fe-4S] cluster is required as a cofactor. The Fe-S cluster can be nitrosylated by nitric oxide (NO). In terms of processing, upon Fe-S cluster removal intramolecular disulfide bonds are formed.

Its subcellular location is the cytoplasm. In terms of biological role, acts as a transcriptional regulator. Probably redox-responsive. The apo- but not holo-form probably binds DNA. In Mycobacterium tuberculosis (strain CDC 1551 / Oshkosh), this protein is Transcriptional regulator WhiB4 (whiB4).